Here is a 244-residue protein sequence, read N- to C-terminus: MKIDLNADLGEGYASDAELLTLVSSANIACGFHAGDAQTMQACVREAIKNGVAIGAHPSFPDRENFGRSAMQLPPETAFAQTLYQIGALAAIARAQGGVMRHVKPHGMLYNQAAKEAQLADAIARAVYACDPALILVGLAGSELIRAGKQYGLTTREEVFADRGYQADGSLVPRSQPGALIEDEEQALAQTLEMVQHGRVKSITGEWATVTAQTVCLHGDGEHALAFARRLRATFAEKGIVVAA.

Belongs to the LamB/PxpA family. As to quaternary structure, forms a complex composed of PxpA, PxpB and PxpC.

The enzyme catalyses 5-oxo-L-proline + ATP + 2 H2O = L-glutamate + ADP + phosphate + H(+). Functionally, catalyzes the cleavage of 5-oxoproline to form L-glutamate coupled to the hydrolysis of ATP to ADP and inorganic phosphate. The protein is 5-oxoprolinase subunit A of Escherichia coli (strain SMS-3-5 / SECEC).